Consider the following 399-residue polypeptide: Nicotinate phosphoribosyltransferase (399 aa).

His217 is modified (phosphohistidine; by autocatalysis).

This sequence belongs to the NAPRTase family. Post-translationally, transiently phosphorylated on a His residue during the reaction cycle. Phosphorylation strongly increases the affinity for substrates and increases the rate of nicotinate D-ribonucleotide production. Dephosphorylation regenerates the low-affinity form of the enzyme, leading to product release.

The enzyme catalyses nicotinate + 5-phospho-alpha-D-ribose 1-diphosphate + ATP + H2O = nicotinate beta-D-ribonucleotide + ADP + phosphate + diphosphate. The protein operates within cofactor biosynthesis; NAD(+) biosynthesis; nicotinate D-ribonucleotide from nicotinate: step 1/1. In terms of biological role, catalyzes the synthesis of beta-nicotinate D-ribonucleotide from nicotinate and 5-phospho-D-ribose 1-phosphate at the expense of ATP. The sequence is that of Nicotinate phosphoribosyltransferase from Burkholderia cenocepacia (strain HI2424).